The primary structure comprises 352 residues: MRKIIHVDMDCFFAAVEMRDDPRLRDIPLAIGGSKERRGVISTANYPARRYGVRSAMPTAMAFKLCPQLTLLPGRMAAYKEASQHIREIFARYTPLIEPLSLDEAYLDVSDSLACGGSATLIAQEIRQSIASELNLTASAGIAPIKFLAKIASELNKPNGQYVITPNQIQPFLQDLPLSKIPGVGAVTAKRLQALGLVTCGEIQKYPLAELLKHFGKFGRVLWERSHGIDEREISPDRLRKSVGVEKTLAEDIYDWESCEALIEELYLELETRLRKVKPDLHIARQGVKLKFHDFQQTTQEHTWPVLNKADLLQIAHAAWNERRAERGVRLVGLHVTLLDPQLERQLLLDWG.

Residues 4–185 (IIHVDMDCFF…LPLSKIPGVG (182 aa)) enclose the UmuC domain. Mg(2+) is bound by residues D8 and D103. Residue E104 is part of the active site.

Belongs to the DNA polymerase type-Y family. In terms of assembly, monomer. Mg(2+) serves as cofactor.

The protein localises to the cytoplasm. It carries out the reaction DNA(n) + a 2'-deoxyribonucleoside 5'-triphosphate = DNA(n+1) + diphosphate. Functionally, poorly processive, error-prone DNA polymerase involved in untargeted mutagenesis. Copies undamaged DNA at stalled replication forks, which arise in vivo from mismatched or misaligned primer ends. These misaligned primers can be extended by PolIV. Exhibits no 3'-5' exonuclease (proofreading) activity. May be involved in translesional synthesis, in conjunction with the beta clamp from PolIII. The sequence is that of DNA polymerase IV from Yersinia pseudotuberculosis serotype O:1b (strain IP 31758).